The chain runs to 156 residues: Endoribonuclease YbeY (156 aa).

Zn(2+) contacts are provided by His-122, His-126, and His-132.

Belongs to the endoribonuclease YbeY family. Zn(2+) serves as cofactor.

The protein resides in the cytoplasm. In terms of biological role, single strand-specific metallo-endoribonuclease involved in late-stage 70S ribosome quality control and in maturation of the 3' terminus of the 16S rRNA. The sequence is that of Endoribonuclease YbeY from Bacillus cereus (strain ATCC 14579 / DSM 31 / CCUG 7414 / JCM 2152 / NBRC 15305 / NCIMB 9373 / NCTC 2599 / NRRL B-3711).